The primary structure comprises 25 residues: VTIGPVCELPKEVGGPCRGHIIPRY.

Residues 6–25 (VCELPKEVGGPCRGHIIPRY) form the BPTI/Kunitz inhibitor domain.

The protein localises to the secreted. Functionally, inhibits bovine trypsin, human plasma kallikrein and human neutrophil elastase. In Rhipicephalus microplus (Cattle tick), this protein is Kunitz-type serine protease inhibitor 2.